Reading from the N-terminus, the 1129-residue chain is SMC5-SMC6 complex localization factor protein 2 (1129 aa).

Disordered regions lie at residues 71–178 (VKAR…SILN), 312–343 (NTSSSSHYKESVTGRSSPHQHDLSSTSFTEQA), and 955–1057 (MLYD…QLEG). The segment covering 72-87 (KARRHTLPHSSHRRSP) has biased composition (basic residues). Residues 93–110 (LLFQQRPRNSSGQFTHNP) are compositionally biased toward polar residues. 2 stretches are compositionally biased toward basic and acidic residues: residues 112–130 (QKKDRMDNRDHKTSIKKEL) and 149–166 (RKSEASTGSERETKRPRV). 2 stretches are compositionally biased toward polar residues: residues 169–178 (QATSSSSILN) and 324–343 (TGRSSPHQHDLSSTSFTEQA). 2 stretches are compositionally biased toward acidic residues: residues 999–1014 (ESEEDDQSKDEEEEDW) and 1033–1048 (SAEDCVEDVSDAEEES).

It belongs to the FAM178 family.

Its subcellular location is the nucleus. In terms of biological role, plays a role in the DNA damage response (DDR) pathway by regulating postreplication repair of UV-damaged DNA and genomic stability maintenance. Promotes the recruitment of the SMC5-SMC6 complex to DNA lesions. This chain is SMC5-SMC6 complex localization factor protein 2 (slf2), found in Danio rerio (Zebrafish).